A 341-amino-acid polypeptide reads, in one-letter code: Methionine import ATP-binding protein MetN (341 aa).

The ABC transporter domain occupies 2–237; sequence IELCGLKKSF…PESLARKMLY (236 aa). An ATP-binding site is contributed by 34–41; the sequence is GKSGAGKS.

Belongs to the ABC transporter superfamily. Methionine importer (TC 3.A.1.24) family. In terms of assembly, the complex is composed of two ATP-binding proteins (MetN), two transmembrane proteins (MetI) and a solute-binding protein (MetQ).

It is found in the cell inner membrane. It catalyses the reaction L-methionine(out) + ATP + H2O = L-methionine(in) + ADP + phosphate + H(+). It carries out the reaction D-methionine(out) + ATP + H2O = D-methionine(in) + ADP + phosphate + H(+). Its function is as follows. Part of the ABC transporter complex MetNIQ involved in methionine import. Responsible for energy coupling to the transport system. This chain is Methionine import ATP-binding protein MetN, found in Legionella pneumophila (strain Paris).